The following is a 101-amino-acid chain: Gibberellin-regulated protein 6 (101 aa).

A signal peptide spans 1–23 (MAKLITSFLLLTILFTFVCLTMS).

This sequence belongs to the GASA family. Six disulfide bonds may be present.

Its subcellular location is the secreted. Gibberellin-regulated protein that may function in hormonal controlled steps of development such as seed germination, flowering and seed maturation. The sequence is that of Gibberellin-regulated protein 6 (GASA6) from Arabidopsis thaliana (Mouse-ear cress).